The following is a 592-amino-acid chain: A-type ATP synthase subunit A (592 aa).

233 to 240 (GPFGSGKT) lines the ATP pocket.

This sequence belongs to the ATPase alpha/beta chains family. In terms of assembly, has multiple subunits with at least A(3), B(3), C, D, E, F, H, I and proteolipid K(x).

The protein localises to the cell membrane. It carries out the reaction ATP + H2O + 4 H(+)(in) = ADP + phosphate + 5 H(+)(out). Component of the A-type ATP synthase that produces ATP from ADP in the presence of a proton gradient across the membrane. The A chain is the catalytic subunit. This Saccharolobus solfataricus (strain ATCC 35092 / DSM 1617 / JCM 11322 / P2) (Sulfolobus solfataricus) protein is A-type ATP synthase subunit A.